Consider the following 67-residue polypeptide: Large ribosomal subunit protein bL35 (67 aa).

This sequence belongs to the bacterial ribosomal protein bL35 family.

The chain is Large ribosomal subunit protein bL35 from Rhizobium etli (strain CIAT 652).